The sequence spans 153 residues: Aspartate carbamoyltransferase regulatory chain (153 aa).

Positions 110, 115, 138, and 141 each coordinate Zn(2+).

Belongs to the PyrI family. As to quaternary structure, contains catalytic and regulatory chains. Requires Zn(2+) as cofactor.

Involved in allosteric regulation of aspartate carbamoyltransferase. The sequence is that of Aspartate carbamoyltransferase regulatory chain from Bacteroides fragilis (strain ATCC 25285 / DSM 2151 / CCUG 4856 / JCM 11019 / LMG 10263 / NCTC 9343 / Onslow / VPI 2553 / EN-2).